The chain runs to 328 residues: Carbonic anhydrase-related protein 11 (328 aa).

The signal sequence occupies residues 1–22; it reads MGAAARLSAPRALVLWAALGAA. The region spanning 33-303 is the Alpha-carbonic anhydrase domain; sequence DWWSYKDNLQ…LAHRALRGNR (271 aa). 3 N-linked (GlcNAc...) asparagine glycosylation sites follow: Asn-118, Asn-170, and Asn-260. The interval 300–328 is disordered; that stretch reads RGNRDPRHPERRCRGPNYRLHVDGAPHGR. Over residues 319–328 the composition is skewed to basic and acidic residues; that stretch reads LHVDGAPHGR.

The protein belongs to the alpha-carbonic anhydrase family.

Its subcellular location is the secreted. Does not have a catalytic activity. The sequence is that of Carbonic anhydrase-related protein 11 (CA11) from Bos taurus (Bovine).